The primary structure comprises 557 residues: Formate--tetrahydrofolate ligase 2 (557 aa).

Thr66 to Thr73 is an ATP binding site.

It belongs to the formate--tetrahydrofolate ligase family.

It catalyses the reaction (6S)-5,6,7,8-tetrahydrofolate + formate + ATP = (6R)-10-formyltetrahydrofolate + ADP + phosphate. Its pathway is one-carbon metabolism; tetrahydrofolate interconversion. This Streptococcus pyogenes serotype M3 (strain ATCC BAA-595 / MGAS315) protein is Formate--tetrahydrofolate ligase 2.